Reading from the N-terminus, the 132-residue chain is Prefoldin subunit alpha (132 aa).

This sequence belongs to the prefoldin subunit alpha family. Heterohexamer of two alpha and four beta subunits.

The protein resides in the cytoplasm. Its function is as follows. Molecular chaperone capable of stabilizing a range of proteins. Seems to fulfill an ATP-independent, HSP70-like function in archaeal de novo protein folding. This chain is Prefoldin subunit alpha, found in Pyrobaculum islandicum (strain DSM 4184 / JCM 9189 / GEO3).